A 158-amino-acid polypeptide reads, in one-letter code: Globin CTT-I/CTT-IA (158 aa).

A signal peptide spans 1–15 (MKFLILALCVAAAMA). One can recognise a Globin domain in the interval 16-158 (GPSGDQIAAA…FVFSTLKNEL (143 aa)). 2 residues coordinate heme b: histidine 74 and histidine 109.

The protein belongs to the globin family. As to quaternary structure, monomer.

This is Globin CTT-I/CTT-IA (CTT-1) from Chironomus thummi thummi (Midge).